We begin with the raw amino-acid sequence, 379 residues long: Cystathionine gamma-lyase (379 aa).

The residue at position 195 (lysine 195) is an N6-(pyridoxal phosphate)lysine.

The protein belongs to the trans-sulfuration enzymes family. It depends on pyridoxal 5'-phosphate as a cofactor.

The enzyme catalyses L,L-cystathionine + H2O = 2-oxobutanoate + L-cysteine + NH4(+). The catalysed reaction is L-homocysteine + H2O = 2-oxobutanoate + hydrogen sulfide + NH4(+) + H(+). Its function is as follows. Catalyzes the conversion of cystathionine to cysteine, and homocysteine to sulfide. The polypeptide is Cystathionine gamma-lyase (mccB) (Bacillus subtilis (strain 168)).